Consider the following 215-residue polypeptide: Ribonuclease HII (215 aa).

In terms of domain architecture, RNase H type-2 spans 19–213 (QTVAGVDEVG…SLRQPSQQID (195 aa)). A divalent metal cation contacts are provided by Asp25, Glu26, and Asp121.

Belongs to the RNase HII family. Mn(2+) serves as cofactor. Requires Mg(2+) as cofactor.

It localises to the cytoplasm. The catalysed reaction is Endonucleolytic cleavage to 5'-phosphomonoester.. Its function is as follows. Endonuclease that specifically degrades the RNA of RNA-DNA hybrids. The polypeptide is Ribonuclease HII (Synechococcus elongatus (strain ATCC 33912 / PCC 7942 / FACHB-805) (Anacystis nidulans R2)).